A 440-amino-acid polypeptide reads, in one-letter code: Cell division protein FtsA (440 aa).

The interval 396-440 (VSSSEEQEQHHHQNEVQQRPKGKQKTQAEHNKQSKMKKLLSMFWE) is disordered.

This sequence belongs to the FtsA/MreB family. Homodimer. Interacts with FtsZ.

Its subcellular location is the cell membrane. Cell division protein that is required for the assembly of the Z ring. May serve as a membrane anchor for the Z ring. Binds and hydrolyzes ATP. Also involved in sporulation. In Bacillus subtilis (strain 168), this protein is Cell division protein FtsA.